Reading from the N-terminus, the 104-residue chain is DNA-directed RNA polymerase subunit omega (104 aa).

The interval 60–104 (VIHPDPEGKREAVRRRAEEERLRKEEEERKIKEQIAKEKEEGEKI) is disordered. Positions 63 to 104 (PDPEGKREAVRRRAEEERLRKEEEERKIKEQIAKEKEEGEKI) are enriched in basic and acidic residues.

The protein belongs to the RNA polymerase subunit omega family. As to quaternary structure, the RNAP catalytic core consists of 2 alpha, 1 beta, 1 beta' and 1 omega subunit. When a sigma factor is associated with the core the holoenzyme is formed, which can initiate transcription.

It catalyses the reaction RNA(n) + a ribonucleoside 5'-triphosphate = RNA(n+1) + diphosphate. Its function is as follows. Promotes RNA polymerase assembly. Latches the N- and C-terminal regions of the beta' subunit thereby facilitating its interaction with the beta and alpha subunits. The polypeptide is DNA-directed RNA polymerase subunit omega (Streptococcus sanguinis (strain SK36)).